Reading from the N-terminus, the 515-residue chain is ATP synthase subunit alpha (515 aa).

171-178 is an ATP binding site; it reads GDRQTGKT.

Belongs to the ATPase alpha/beta chains family. In terms of assembly, F-type ATPases have 2 components, CF(1) - the catalytic core - and CF(0) - the membrane proton channel. CF(1) has five subunits: alpha(3), beta(3), gamma(1), delta(1), epsilon(1). CF(0) has three main subunits: a(1), b(2) and c(9-12). The alpha and beta chains form an alternating ring which encloses part of the gamma chain. CF(1) is attached to CF(0) by a central stalk formed by the gamma and epsilon chains, while a peripheral stalk is formed by the delta and b chains.

The protein resides in the cell inner membrane. The catalysed reaction is ATP + H2O + 4 H(+)(in) = ADP + phosphate + 5 H(+)(out). In terms of biological role, produces ATP from ADP in the presence of a proton gradient across the membrane. The alpha chain is a regulatory subunit. This Xylella fastidiosa (strain 9a5c) protein is ATP synthase subunit alpha.